The chain runs to 73 residues: DNA-directed RNA polymerase subunit omega (73 aa).

Belongs to the RNA polymerase subunit omega family. In terms of assembly, the RNAP catalytic core consists of 2 alpha, 1 beta, 1 beta' and 1 omega subunit. When a sigma factor is associated with the core the holoenzyme is formed, which can initiate transcription.

The enzyme catalyses RNA(n) + a ribonucleoside 5'-triphosphate = RNA(n+1) + diphosphate. Promotes RNA polymerase assembly. Latches the N- and C-terminal regions of the beta' subunit thereby facilitating its interaction with the beta and alpha subunits. This chain is DNA-directed RNA polymerase subunit omega, found in Oleidesulfovibrio alaskensis (strain ATCC BAA-1058 / DSM 17464 / G20) (Desulfovibrio alaskensis).